Here is an 88-residue protein sequence, read N- to C-terminus: Homeobox protein knotted-1-like 1 (88 aa).

Residues 4–24 enclose the ELK domain; sequence ELKLELKQGFKSRIEDVREEI. Positions 25–88 form a DNA-binding region, homeobox; TALE-type; it reads LRKRRAGKLP…NQRKRNWHNN (64 aa).

It belongs to the TALE/KNOX homeobox family. As to expression, highly expressed in the roots.

It localises to the nucleus. The protein is Homeobox protein knotted-1-like 1 (KNOX1) of Zea mays (Maize).